We begin with the raw amino-acid sequence, 187 residues long: Elongation factor P (187 aa).

The protein belongs to the elongation factor P family.

It localises to the cytoplasm. It participates in protein biosynthesis; polypeptide chain elongation. Involved in peptide bond synthesis. Stimulates efficient translation and peptide-bond synthesis on native or reconstituted 70S ribosomes in vitro. Probably functions indirectly by altering the affinity of the ribosome for aminoacyl-tRNA, thus increasing their reactivity as acceptors for peptidyl transferase. In Clavibacter michiganensis subsp. michiganensis (strain NCPPB 382), this protein is Elongation factor P.